The chain runs to 301 residues: Protease HtpX (301 aa).

Transmembrane regions (helical) follow at residues Ile4 to Leu24 and Leu38 to Phe58. His147 is a binding site for Zn(2+). Glu148 is a catalytic residue. Zn(2+) is bound at residue His151. 2 helical membrane-spanning segments follow: residues Gly155 to Ala175 and Phe200 to Trp220. Glu226 provides a ligand contact to Zn(2+).

It belongs to the peptidase M48B family. It depends on Zn(2+) as a cofactor.

The protein resides in the cell inner membrane. The sequence is that of Protease HtpX from Acinetobacter baumannii (strain AB307-0294).